Consider the following 421-residue polypeptide: Glucose-1-phosphate adenylyltransferase (421 aa).

Residues Tyr108, Gly173, 188-189 (EK), and Ser206 contribute to the alpha-D-glucose 1-phosphate site.

It belongs to the bacterial/plant glucose-1-phosphate adenylyltransferase family. As to quaternary structure, homotetramer.

The catalysed reaction is alpha-D-glucose 1-phosphate + ATP + H(+) = ADP-alpha-D-glucose + diphosphate. Its pathway is glycan biosynthesis; glycogen biosynthesis. In terms of biological role, involved in the biosynthesis of ADP-glucose, a building block required for the elongation reactions to produce glycogen. Catalyzes the reaction between ATP and alpha-D-glucose 1-phosphate (G1P) to produce pyrophosphate and ADP-Glc. This is Glucose-1-phosphate adenylyltransferase from Mesorhizobium japonicum (strain LMG 29417 / CECT 9101 / MAFF 303099) (Mesorhizobium loti (strain MAFF 303099)).